Reading from the N-terminus, the 90-residue chain is Small ribosomal subunit protein uS15c (90 aa).

This sequence belongs to the universal ribosomal protein uS15 family. In terms of assembly, part of the 30S ribosomal subunit.

The protein resides in the plastid. The protein localises to the chloroplast. The polypeptide is Small ribosomal subunit protein uS15c (rps15) (Gossypium barbadense (Sea Island cotton)).